The chain runs to 485 residues: MSIQGTILVVDDEVRSQEALRRVLREDFEVLCVGNATDAEKLLEGEIVHAILCDQRMPHESGVSFLKRVRELWPDPVRMIISGYSESEDIIAGLNEAGIYQYITKPWQPDQLVETVKEAVQLYRLQKETETAGVDVKATSGHIKKVVSVKRGVAKQLYDFDRIVHSTESPMHAVIELGRRAADYDISVLITGESGTGKELLARAIHYGSARANRAFVVENCGALPDELLESELFGCKKGAFTGAYQDRIGLFEVADGGTIFLDEIGETSPAFQVKLLRVLQESEIRPLGAQRVRKVDVRVVAATNRDLEAEVEAGRFRRDLYYRLAAFPVHMPALRERPMDIPLIAEGVLSAVKSSFNRPNLRFARSALEEFGKYHWPGNVRELQNEIQRMAVLADRDELAAPPLLGRRNGKRSAPLPAHGRLNGSASLKDKVEDLEKSVIMNCLERNDGNISRVASELGLSRVGLRNKLSRYDLRKNAKGDAFS.

The region spanning 6 to 120 (TILVVDDEVR…QLVETVKEAV (115 aa)) is the Response regulatory domain. Asp-54 is modified (4-aspartylphosphate). One can recognise a Sigma-54 factor interaction domain in the interval 166–392 (STESPMHAVI…ELQNEIQRMA (227 aa)). Residues 192-199 (GESGTGKE) and 264-273 (EIGETSPAFQ) contribute to the ATP site. The segment at 404–426 (PLLGRRNGKRSAPLPAHGRLNGS) is disordered. Residues 451-470 (NISRVASELGLSRVGLRNKL) constitute a DNA-binding region (H-T-H motif).

The protein resides in the cytoplasm. In terms of biological role, probable member of the two-component regulatory system involved in the regulation of the hydrogenase activity. HoxA is probably phosphorylated by a sensory component (which could be HoxX) and then acts in conjunction with sigma-54 as a transcriptional activator. The protein is Hydrogenase transcriptional regulatory protein HoxA (hoxA) of Bradyrhizobium diazoefficiens (strain JCM 10833 / BCRC 13528 / IAM 13628 / NBRC 14792 / USDA 110).